The chain runs to 328 residues: Cytochrome c biogenesis protein CcsA (328 aa).

The next 8 helical transmembrane spans lie at 13-33, 46-66, 73-93, 101-121, 146-166, 234-254, 263-283, and 295-315; these read ISFSVVSIVLTIYFLTLLVNL, GIIITFFGITGLLFTRWIYSG, LYESLIFLSWAFSIIHMVSYF, LNAITAPSAIFIQGFATSGLL, MILGYGALLCGSLLSIALLVI, IISLGFIFLTVGILSGAVWAN, WDPKETWAFITWTIFAIYLHI, and AIVASIGFLLIWICYFGVILL.

Belongs to the CcmF/CycK/Ccl1/NrfE/CcsA family. In terms of assembly, may interact with Ccs1.

The protein resides in the plastid. Its subcellular location is the chloroplast thylakoid membrane. Its function is as follows. Required during biogenesis of c-type cytochromes (cytochrome c6 and cytochrome f) at the step of heme attachment. In Crucihimalaya wallichii (Rock-cress), this protein is Cytochrome c biogenesis protein CcsA.